The sequence spans 232 residues: UPF0758 protein FN0909 (232 aa).

The MPN domain maps to 110-232 (KISNKDILLK…YFSFLEEGLI (123 aa)). 3 residues coordinate Zn(2+): histidine 181, histidine 183, and aspartate 194. Residues 181-194 (HNHPSDNITPSKSD) carry the JAMM motif motif.

It belongs to the UPF0758 family.

The protein is UPF0758 protein FN0909 of Fusobacterium nucleatum subsp. nucleatum (strain ATCC 25586 / DSM 15643 / BCRC 10681 / CIP 101130 / JCM 8532 / KCTC 2640 / LMG 13131 / VPI 4355).